The primary structure comprises 459 residues: Cysteine--tRNA ligase (459 aa).

Cys27 provides a ligand contact to Zn(2+). The 'HIGH' region motif lies at Pro29–His39. The Zn(2+) site is built by Cys202, His231, and Glu235. Residues Lys263–Ser267 carry the 'KMSKS' region motif. Lys266 provides a ligand contact to ATP.

Belongs to the class-I aminoacyl-tRNA synthetase family. As to quaternary structure, monomer. Zn(2+) serves as cofactor.

It localises to the cytoplasm. It catalyses the reaction tRNA(Cys) + L-cysteine + ATP = L-cysteinyl-tRNA(Cys) + AMP + diphosphate. The polypeptide is Cysteine--tRNA ligase (Campylobacter fetus subsp. fetus (strain 82-40)).